Reading from the N-terminus, the 205-residue chain is Recombination protein RecR (205 aa).

The segment at 59–74 (CARCNTFCEGGLCDIC) adopts a C4-type zinc-finger fold. The 96-residue stretch at 82-177 (RRLMVVHMPA…KVSRLSQGIP (96 aa)) folds into the Toprim domain.

This sequence belongs to the RecR family.

Its function is as follows. May play a role in DNA repair. It seems to be involved in an RecBC-independent recombinational process of DNA repair. It may act with RecF and RecO. The protein is Recombination protein RecR of Neisseria meningitidis serogroup A / serotype 4A (strain DSM 15465 / Z2491).